The primary structure comprises 116 residues: Large ribosomal subunit protein bL20 (116 aa).

This sequence belongs to the bacterial ribosomal protein bL20 family.

Binds directly to 23S ribosomal RNA and is necessary for the in vitro assembly process of the 50S ribosomal subunit. It is not involved in the protein synthesizing functions of that subunit. The chain is Large ribosomal subunit protein bL20 from Hydrogenobaculum sp. (strain Y04AAS1).